The primary structure comprises 598 residues: MTDLTTSDSLQPAWQTRDHLDDPVIGELSNRFGPEAFVVQATRTGMPVVWVKREQLLEVMSFLRKQPKPYVMLFDLHGVDERLRTHSQGLPDADFSVFYHLLSIERNRDIMLKVALSEKDLHVSTATKIFPNANWYERETWEMFGITFDGHPHLTRIMMPQSWEGHPLRKDYPARATEFDPYVLTKQKEDLEMESLTFKPEDWGMKRGTENEDFMFLNLGPNHPSSHGAFRIVLQLDGEEIIDCVPDVGYHHRGAEKMGERQSWHSYIPYTDRIEYLGGCVNEMPYVLAVEKLAGIVVPDRVNTIRVMLSELFRINSHLLYISTFIQDVGAMTPVFFAFTDRQKVYDVIEAITGFRMHPAWFRIGGVAHDLPRGWERLLRDFLDWMPKRLDSYVKAALQNSILKGRSVGVAAYNAKEALEWGVTGAGLRATGVEFDVRKWRPYSGYENFDFEVPVGNNGDCYDRVMLKVEELRQSLRILEQCYKNMPEGPFKADHPLTTPPPKERTLQHIETLITHFLQVSWGPVMPANESFQMIEATKGINSYYLTSDGSTMSYRTRIRTPSYAHLQQIPSVIRGSLVSDLIVYLGSIDFVMSDVDR.

The segment at 1 to 189 (MTDLTTSDSL…DPYVLTKQKE (189 aa)) is NADH dehydrogenase I subunit C. The segment at 213-598 (DFMFLNLGPN…IDFVMSDVDR (386 aa)) is NADH dehydrogenase I subunit D.

This sequence in the N-terminal section; belongs to the complex I 30 kDa subunit family. In the C-terminal section; belongs to the complex I 49 kDa subunit family. As to quaternary structure, NDH-1 is composed of 13 different subunits. Subunits NuoB, CD, E, F, and G constitute the peripheral sector of the complex.

The protein resides in the cell inner membrane. It catalyses the reaction a quinone + NADH + 5 H(+)(in) = a quinol + NAD(+) + 4 H(+)(out). Its function is as follows. NDH-1 shuttles electrons from NADH, via FMN and iron-sulfur (Fe-S) centers, to quinones in the respiratory chain. The immediate electron acceptor for the enzyme in this species is believed to be ubiquinone. Couples the redox reaction to proton translocation (for every two electrons transferred, four hydrogen ions are translocated across the cytoplasmic membrane), and thus conserves the redox energy in a proton gradient. This is NADH-quinone oxidoreductase subunit C/D from Yersinia pestis bv. Antiqua (strain Angola).